The sequence spans 392 residues: Methylthioribose-1-phosphate isomerase (392 aa).

Asp-253 acts as the Proton donor in catalysis.

This sequence belongs to the eIF-2B alpha/beta/delta subunits family. MtnA subfamily.

Its subcellular location is the cytoplasm. It is found in the nucleus. It carries out the reaction 5-(methylsulfanyl)-alpha-D-ribose 1-phosphate = 5-(methylsulfanyl)-D-ribulose 1-phosphate. It participates in amino-acid biosynthesis; L-methionine biosynthesis via salvage pathway; L-methionine from S-methyl-5-thio-alpha-D-ribose 1-phosphate: step 1/6. In terms of biological role, catalyzes the interconversion of methylthioribose-1-phosphate (MTR-1-P) into methylthioribulose-1-phosphate (MTRu-1-P). This is Methylthioribose-1-phosphate isomerase (mri1) from Pyrenophora tritici-repentis (strain Pt-1C-BFP) (Wheat tan spot fungus).